Here is a 324-residue protein sequence, read N- to C-terminus: MDTLTRFLPEHLQQNQLPEALGGVLLSVVSACTEINAKVRLGALAGVLGMAGTGNIQGEDQKKLDVIANNIMIDTLKANPAVAGLASEEEDSFVSAGENGRYLVLFDPLDGSSNIDVNISVGTIFSILEKPEGALATESFLQTGRQQLAAGYVLYGPQTQLVFTFGHGVYMFTLNAENEFVLTKEKPKVPESTKEFAINMSNRRHWLPPVQQYIDELLAGETGTRGKNYNMRWVASMVAEIHRILMRGGVFMYPQDKRDPSKPGKLRLMYEANPMALILEQAGASASNARQDILGIRPESLHQRVAVIMGSSEEVDYLNRLHSK.

Residues glutamate 88, aspartate 107, leucine 109, and aspartate 110 each contribute to the Mg(2+) site. Substrate contacts are provided by residues 110-113, asparagine 199, and lysine 265; that span reads DGSS. Glutamate 271 contacts Mg(2+).

It belongs to the FBPase class 1 family. As to quaternary structure, homotetramer. Mg(2+) is required as a cofactor.

The protein localises to the cytoplasm. The catalysed reaction is beta-D-fructose 1,6-bisphosphate + H2O = beta-D-fructose 6-phosphate + phosphate. The protein operates within carbohydrate biosynthesis; gluconeogenesis. The chain is Fructose-1,6-bisphosphatase class 1 from Neisseria meningitidis serogroup A / serotype 4A (strain DSM 15465 / Z2491).